We begin with the raw amino-acid sequence, 119 residues long: Large ribosomal subunit protein uL18 (119 aa).

It belongs to the universal ribosomal protein uL18 family. In terms of assembly, part of the 50S ribosomal subunit; part of the 5S rRNA/L5/L18/L25 subcomplex. Contacts the 5S and 23S rRNAs.

Functionally, this is one of the proteins that bind and probably mediate the attachment of the 5S RNA into the large ribosomal subunit, where it forms part of the central protuberance. The polypeptide is Large ribosomal subunit protein uL18 (Xylella fastidiosa (strain M23)).